The following is a 271-amino-acid chain: MNIKQFFVPAGKPLSGLAVGLSIFLTALFLVNNLVYPINEHLLLKPDSLFKFDLNRISLYPLAHLSFFHLFFNVISTFSMIVMFEESHGTLYTGVILNLLAVFTAIPYCLIGSLLFPNVEIGGASGWFFSFLGYFAVKESRVRNSVMITSTFSFPTLYFPVALLFVTALLAPGSSLPGHAIGLLLGYFMGLKENWVAKITPPSFVLKKIETWVDPLINLIPFGIKYYREVEVDRSLEYTSVYLGSESRLPLHNTDTPAEPTFQGNGRVLGN.

The next 6 membrane-spanning stretches (helical) occupy residues 16 to 36 (GLAV…NLVY), 64 to 84 (HLSF…IVMF), 89 to 111 (GTLY…YCLI), 115 to 137 (LFPN…YFAV), 152 to 172 (FSFP…LLAP), and 176 to 196 (LPGH…ENWV). Ser125 functions as the Nucleophile in the catalytic mechanism. The active site involves His179. Residues 252-271 (HNTDTPAEPTFQGNGRVLGN) form a disordered region.

This sequence belongs to the peptidase S54 family.

It localises to the golgi apparatus membrane. Its subcellular location is the golgi apparatus. The protein localises to the cis-Golgi network membrane. The enzyme catalyses Cleaves type-1 transmembrane domains using a catalytic dyad composed of serine and histidine that are contributed by different transmembrane domains.. Probable rhomboid-type serine protease that catalyzes intramembrane proteolysis. In Kluyveromyces lactis (strain ATCC 8585 / CBS 2359 / DSM 70799 / NBRC 1267 / NRRL Y-1140 / WM37) (Yeast), this protein is Rhomboid-type serine protease 2 (RBD2).